A 443-amino-acid chain; its full sequence is Ribulose bisphosphate carboxylase large chain (443 aa).

Substrate contacts are provided by N89 and T139. Residue K141 is the Proton acceptor of the active site. K143 contributes to the substrate binding site. K167, D169, and E170 together coordinate Mg(2+). K167 carries the N6-carboxylysine modification. H260 functions as the Proton acceptor in the catalytic mechanism. Substrate contacts are provided by R261, H293, and S345.

This sequence belongs to the RuBisCO large chain family. Type I subfamily. As to quaternary structure, heterohexadecamer of 8 large chains and 8 small chains; disulfide-linked. The disulfide link is formed within the large subunit homodimers. Requires Mg(2+) as cofactor. The disulfide bond which can form in the large chain dimeric partners within the hexadecamer appears to be associated with oxidative stress and protein turnover.

The protein localises to the plastid. Its subcellular location is the chloroplast. It carries out the reaction 2 (2R)-3-phosphoglycerate + 2 H(+) = D-ribulose 1,5-bisphosphate + CO2 + H2O. It catalyses the reaction D-ribulose 1,5-bisphosphate + O2 = 2-phosphoglycolate + (2R)-3-phosphoglycerate + 2 H(+). Its function is as follows. RuBisCO catalyzes two reactions: the carboxylation of D-ribulose 1,5-bisphosphate, the primary event in carbon dioxide fixation, as well as the oxidative fragmentation of the pentose substrate in the photorespiration process. Both reactions occur simultaneously and in competition at the same active site. This Villarsia calthifolia (Marsh flower) protein is Ribulose bisphosphate carboxylase large chain.